Consider the following 440-residue polypeptide: Stromal membrane-associated protein 1 (440 aa).

The region spanning 18 to 143 is the Arf-GAP domain; sequence QLILSKLLRE…IAITNKEKEK (126 aa). A C4-type zinc finger spans residues 33 to 56; the sequence is CADCEAKGPRWASWNIGVFICIRC. Composition is skewed to basic and acidic residues over residues 140 to 158 and 165 to 178; these read EKEK…EKPA and KLPK…EPKK. Disordered regions lie at residues 140-211 and 410-440; these read EKEK…PATA and NASA…QLWK. Positions 192 to 196 match the Interaction with clathrin heavy chains motif; that stretch reads LLGLD. Low complexity predominate over residues 420-440; it reads STTAGWSGSSSGQTLSTQLWK.

Interacts with ARF6. Interacts with clathrin heavy chains via the clathrin box-like motif. Detected in adult brain, lung, heart, liver, ovary and bone marrow. Detected in stromal cells of the red pulp of adult spleen.

It localises to the cell membrane. In terms of biological role, GTPase activating protein that acts on ARF6. Plays a role in clathrin-dependent endocytosis. May play a role in erythropoiesis. The chain is Stromal membrane-associated protein 1 (Smap1) from Mus musculus (Mouse).